The sequence spans 196 residues: ATP-dependent Clp protease proteolytic subunit (196 aa).

Ser101 acts as the Nucleophile in catalysis. His126 is an active-site residue.

Belongs to the peptidase S14 family. As to quaternary structure, component of the chloroplastic Clp protease core complex.

Its subcellular location is the plastid. It localises to the chloroplast stroma. It catalyses the reaction Hydrolysis of proteins to small peptides in the presence of ATP and magnesium. alpha-casein is the usual test substrate. In the absence of ATP, only oligopeptides shorter than five residues are hydrolyzed (such as succinyl-Leu-Tyr-|-NHMec, and Leu-Tyr-Leu-|-Tyr-Trp, in which cleavage of the -Tyr-|-Leu- and -Tyr-|-Trp bonds also occurs).. Its function is as follows. Cleaves peptides in various proteins in a process that requires ATP hydrolysis. Has a chymotrypsin-like activity. Plays a major role in the degradation of misfolded proteins. The polypeptide is ATP-dependent Clp protease proteolytic subunit (Pinus thunbergii (Japanese black pine)).